Reading from the N-terminus, the 62-residue chain is Large ribosomal subunit protein uL29 (62 aa).

Belongs to the universal ribosomal protein uL29 family.

The sequence is that of Large ribosomal subunit protein uL29 from Geobacter metallireducens (strain ATCC 53774 / DSM 7210 / GS-15).